Reading from the N-terminus, the 698-residue chain is Serine/alanine racemase (698 aa).

At 1 to 10 (MKNKGIDQFR) the chain is on the cytoplasmic side. The chain crosses the membrane as a helical span at residues 11-31 (VIAAMMVVAIHCLPLHYLWPE). The Extracellular portion of the chain corresponds to 32–42 (GDILITLTIFR). Residues 43–63 (VAVPFFFMISGYYVFAELAVA) form a helical membrane-spanning segment. Topologically, residues 64–81 (NSYPSRQRVFNFIKKQLK) are cytoplasmic. The helical transmembrane segment at 82 to 102 (VYLLATLMFLPLALYSQTIGF) threads the bilayer. Residues 103-121 (DLPVGTLVQVLLVNGILYH) are Extracellular-facing. Residues 122 to 142 (LWYFPALITGSLLLTSLLIHV) traverse the membrane as a helical segment. Over 143-147 (SFKKV) the chain is Cytoplasmic. Residues 148–168 (FWLAAGLYLIGLGGDSWFGLI) form a helical membrane-spanning segment. Residues 169–183 (QQTPIEPFYTAVFHL) are Extracellular-facing. Residues 184–204 (LDGTRNGIFFTPLFLCLGVLV) traverse the membrane as a helical segment. The Cytoplasmic portion of the chain corresponds to 205-216 (RKQSEKRSLSKT). A helical transmembrane segment spans residues 217-237 (ALFFLISLIGLLIESAYLHGF). Residues 238-244 (SIPKHDS) lie on the Extracellular side of the membrane. The chain crosses the membrane as a helical span at residues 245–265 (MYLFLPVVLFFLFPLILRWHP). Topologically, residues 266–274 (HRTWKHPGQ) are cytoplasmic. The helical transmembrane segment at 275-295 (LSLWLYLLHPYTIAGTHFLSQ) threads the bilayer. Topologically, residues 296 to 301 (KISILQ) are extracellular. The helical transmembrane segment at 302–322 (NNLINYLVVLILTIGFICLFL) threads the bilayer. The Cytoplasmic segment spans residues 323–698 (RQKHSWFRHK…IGPRVSARIK (376 aa)). The tract at residues 332-698 (KQTTPVKRAV…IGPRVSARIK (367 aa)) is racemase. Lys371 acts as the Proton acceptor in catalysis. N6-(pyridoxal phosphate)lysine is present on Lys371. Arg465 contacts substrate. Tyr597 (proton acceptor) is an active-site residue. Residue Met646 coordinates substrate.

In the N-terminal section; belongs to the acyltransferase 3 family. The protein in the C-terminal section; belongs to the alanine racemase family. In terms of assembly, homodimer. The cofactor is pyridoxal 5'-phosphate.

The protein resides in the cell membrane. It catalyses the reaction L-alanine = D-alanine. It carries out the reaction L-serine = D-serine. It functions in the pathway amino-acid biosynthesis; D-alanine biosynthesis; D-alanine from L-alanine: step 1/1. In terms of biological role, catalyzes the interconversion of L-serine and D-serine, and L-alanine and D-alanine. L-alanine is racemized at a rate that is 14% of that of L-serine. Together with VanC/VanC1 and VanXYC, required for vancomycin resistance in E.gallinarum strain BM4174. This chain is Serine/alanine racemase, found in Enterococcus gallinarum.